The chain runs to 277 residues: Ras suppressor protein 1 (277 aa).

Residues 1-23 form a disordered region; it reads MSKSLKKLVEESREKNQPEVDMS. S2 carries the N-acetylserine modification. Positions 7-23 are enriched in basic and acidic residues; that stretch reads KLVEESREKNQPEVDMS. 7 LRR repeats span residues 41–63, 64–85, 87–108, 110–133, 135–156, 158–179, and 181–202; these read HITQ…AELK, NLEV…ISSL, KLKH…FGSS, LLEV…FFYL, TLRA…IGKL, KLQI…IGEL, and QLKE…LGNL. Positions 250–277 are disordered; sequence MQANPEPPKKNNDKSKKISRKPLAAKNK. Basic and acidic residues predominate over residues 256–265; the sequence is PPKKNNDKSK.

Its function is as follows. Potentially plays a role in the Ras signal transduction pathway. Capable of suppressing v-Ras transformation in vitro. The sequence is that of Ras suppressor protein 1 (Rsu1) from Mus musculus (Mouse).